Here is a 101-residue protein sequence, read N- to C-terminus: Osteocalcin (101 aa).

Residues 1–19 (MKLAILTVLLLGAAVLCLG) form the signal peptide. Residues 20 to 52 (SKDADHSNSVGESHSSEAFISRQESASFARLKR) constitute a propeptide that is removed on maturation. Positions 53-99 (SYGNNVGQGAAVGSPLESQREVCELNPDCDELADHIGFQEAYRRFYG) constitute a Gla domain. Positions 69, 73, 76, and 82 each coordinate Ca(2+). Glutamate 69, glutamate 73, and glutamate 76 each carry 4-carboxyglutamate. A disulfide bridge links cysteine 75 with cysteine 81.

It belongs to the osteocalcin/matrix Gla protein family. Gamma-carboxyglutamate residues are formed by vitamin K dependent carboxylation by GGCX. These residues are essential for the binding of calcium.

It localises to the secreted. Functionally, the carboxylated form is one of the main organic components of the bone matrix, which constitutes 1-2% of the total bone protein. The carboxylated form binds strongly to apatite and calcium. The sequence is that of Osteocalcin (bglap) from Xenopus laevis (African clawed frog).